We begin with the raw amino-acid sequence, 299 residues long: MKRLFFIFVMLIVLLCGCTSNKTTNVNNEININKIETNKTLENESLIQKTEKNQLAKIKEIKYMYIVKEGNKTKIQFALAYENGSLARVSNGKVVLKIFDDSGLLFNKTYYINELPLKAGYYYEIELPKIKGFYKNAKFVLTFKNDNVNLSKTTYGTIERYSEEEMKEIFEKEYHENSIKTNIEEFRDVVGIKFTVKEYGYYKIYNNQTDRIEKVFRVDFVAKNLNPDTYEFAPIGVCLISGDKKYWKIGGLDEIEIGINQEIAGYWIFNKPDSIENLRLDFKMGNIVYDIPLTQNNLK.

A helical transmembrane segment spans residues 4–20 (LFFIFVMLIVLLCGCTS).

The protein resides in the membrane. This is an uncharacterized protein from Methanocaldococcus jannaschii (strain ATCC 43067 / DSM 2661 / JAL-1 / JCM 10045 / NBRC 100440) (Methanococcus jannaschii).